A 78-amino-acid chain; its full sequence is Large ribosomal subunit protein bL28 (78 aa).

The protein belongs to the bacterial ribosomal protein bL28 family.

The polypeptide is Large ribosomal subunit protein bL28 (Proteus mirabilis (strain HI4320)).